The sequence spans 160 residues: Deoxyuridine 5'-triphosphate nucleotidohydrolase (160 aa).

The dUMP site is built by serine 80, glycine 93, aspartate 96, tyrosine 99, lysine 104, arginine 149, phenylalanine 154, and glycine 155.

Belongs to the dUTPase family. In terms of assembly, homotrimer. The cofactor is Mg(2+).

The enzyme catalyses dUTP + H2O = dUMP + diphosphate + H(+). Its pathway is pyrimidine metabolism; dUMP biosynthesis; dUMP from dCTP (dUTP route): step 2/2. Its function is as follows. Involved in nucleotide metabolism via production of dUMP, the immediate precursor of thymidine nucleotides, and decreases the intracellular concentration of dUTP so that uracil cannot be incorporated into DNA. The polypeptide is Deoxyuridine 5'-triphosphate nucleotidohydrolase (DUT1) (Debaryomyces hansenii (strain ATCC 36239 / CBS 767 / BCRC 21394 / JCM 1990 / NBRC 0083 / IGC 2968) (Yeast)).